The following is a 345-amino-acid chain: Protein RecA (345 aa).

67-74 (GPESSGKT) is an ATP binding site.

Belongs to the RecA family.

It is found in the cytoplasm. Can catalyze the hydrolysis of ATP in the presence of single-stranded DNA, the ATP-dependent uptake of single-stranded DNA by duplex DNA, and the ATP-dependent hybridization of homologous single-stranded DNAs. It interacts with LexA causing its activation and leading to its autocatalytic cleavage. The protein is Protein RecA of Acidothermus cellulolyticus (strain ATCC 43068 / DSM 8971 / 11B).